We begin with the raw amino-acid sequence, 1033 residues long: MKKVDVKESAVGRETRIRKQWNEQSIFEQSIQNREGAQSFVFYEGPPTANGLPHVGHALGRTIKDVVARYKTMAGYKVLRKAGWDTHGLPVELGVEKQLGISGKHEIEEYGIEPFIKKCKESVFTYEKQWREFTESIGYWVDMDDPYVTLENPYIESVWHILGTIHEKGLLYKGHRVSPYCPSCQTSLSSHEVAQGYKTVKDLSATVKFKVKDSENEYFLGWTTTPWTLPANVALAVHPNMEYVKAKQEGHVYIVAKERVQDVLKENYEVLSVHKGEELLNISYTAPFPMKEVTNGYRVIGADFVTADSGTGLVHIAPAYGEDDYRVVQSEGLSFLHVVDEKGEYTEAVPFLKGKFVKDCDVDIVRYLAKEGLLYHKEKYEHSYPHCWRCDSPLLYYAGESWLIRTTAIKDTFLQNNDSVTWYPDHMKHGRFGKFLENMVDWNISRNRYWGTPLNVWECESCDHQFAPKSIDDLRKHSTKETQEDLELHKPYVDEVQVCCEKCGGTMTRTPEVIDVWFDSGSMPFAQYHYPFENKELFEEQFPADVIAEGIDQTRGWFYSLLAVSALYTGKVPYKRVLSLGHVLDEEGQKMSKSKGNALDPVDLVNQFGADALRWALLVDSAPWNAKRFSERTVLEAKSKFVDTLVNVYSFYVLYANLDEYNPNETYDVKRTKLDEWVLSRLHSTTKKVRIALDDYQFTNAAREIAALVDEVSNWYVRRSRNRFWESGMNAEKAAAYETLHDVLVTISKLIAPFTPFVAEDIHLNLTGSSVHLEDYPVVNESLLQPKLEAEMNAVLQVVELGRSNRNQHSLKVKQPLAELVLLEHNENDMDWESYRDIVMDELNVKAFHVELDETKYTSYQLKLNFKTAGPKFGKNVNAVNGWLKQLSQDEVQNFVSTERAVYEVASGEEIVVTTEDVLVEKVAKSGFSNTTNGQYTVMLDTNVTEELLQEGVAREFIRAVQEYRKQLNLPVNLRVDVILDTEEELQQTLTNHKELLEENLLVKQFTFGHLTNEDDELSLGETKVRIKLSATK.

The 'HIGH' region motif lies at 47–57 (PTANGLPHVGH). The 'KMSKS' region motif lies at 590–594 (KMSKS). Residue Lys-593 coordinates ATP.

This sequence belongs to the class-I aminoacyl-tRNA synthetase family. IleS type 2 subfamily. As to quaternary structure, monomer. Zn(2+) is required as a cofactor.

It is found in the cytoplasm. It carries out the reaction tRNA(Ile) + L-isoleucine + ATP = L-isoleucyl-tRNA(Ile) + AMP + diphosphate. Its function is as follows. Catalyzes the attachment of isoleucine to tRNA(Ile). As IleRS can inadvertently accommodate and process structurally similar amino acids such as valine, to avoid such errors it has two additional distinct tRNA(Ile)-dependent editing activities. One activity is designated as 'pretransfer' editing and involves the hydrolysis of activated Val-AMP. The other activity is designated 'posttransfer' editing and involves deacylation of mischarged Val-tRNA(Ile). In Bacillus cereus (strain ZK / E33L), this protein is Isoleucine--tRNA ligase 2.